We begin with the raw amino-acid sequence, 289 residues long: ATP synthase gamma chain (289 aa).

This sequence belongs to the ATPase gamma chain family. F-type ATPases have 2 components, CF(1) - the catalytic core - and CF(0) - the membrane proton channel. CF(1) has five subunits: alpha(3), beta(3), gamma(1), delta(1), epsilon(1). CF(0) has three main subunits: a, b and c.

Its subcellular location is the cell inner membrane. Its function is as follows. Produces ATP from ADP in the presence of a proton gradient across the membrane. The gamma chain is believed to be important in regulating ATPase activity and the flow of protons through the CF(0) complex. The polypeptide is ATP synthase gamma chain (Azorhizobium caulinodans (strain ATCC 43989 / DSM 5975 / JCM 20966 / LMG 6465 / NBRC 14845 / NCIMB 13405 / ORS 571)).